The chain runs to 789 residues: Zinc finger protein GLIS1 (789 aa).

2 stretches are compositionally biased toward basic and acidic residues: residues 1 to 16 (MHCE…RPKE) and 63 to 74 (RAHDLLRPRSPR). 3 disordered regions span residues 1–29 (MHCE…GPVS), 53–93 (LLPR…YGHS), and 278–304 (PPLP…QEGS). Polar residues predominate over residues 80–92 (KTGSGKVNGSYGH). Residues 366 to 391 (QACRWVDCCAAYEQQEELVRHIEKSH) form a C2H2-type 1 zinc finger. A C2H2-type 2; atypical zinc finger spans residues 400 to 427 (FTCFWAGCVRRYKPFNARYKLLIHMRVH). 3 C2H2-type zinc fingers span residues 433 to 457 (NKCM…LRSH), 463 to 487 (YLCQ…QRTH), and 493 to 517 (YACQ…VKAH). 2 disordered regions span residues 506–529 (DPSS…KKLH) and 573–684 (VYPG…QGYQ). Positions 511–527 (RKHVKAHSAKEQQVRKK) match the Bipartite nuclear localization signal motif. A compositionally biased stretch (low complexity) spans 648–658 (ASQSQSPGGQS).

This sequence belongs to the GLI C2H2-type zinc-finger protein family. Interacts with KLF4. Interacts with POU5F1 and/or POU5F1B. Interacts with SOX2. As to expression, in the adult, expressed highly in placenta and kidney and at lower levels in the testis, brain, colon, brown fat tissue and thymus. During embryo development, expressed in the frontal nasal region, branchial arches, somites, vibrissal and hair follicles, limb buds, craniofacial regions, ventral part of the tail, intervertebral disks, teeth, eyes and kidney.

It is found in the nucleus. In terms of biological role, acts both as a repressor and an ctivator of transcription. Binds to the consensus sequence 5'-GACCACCCAC-3'. By controlling the expression of genes involved in cell differentiation inhibits the lineage commitment of multipotent cells. Prevents, for instance, the differentiation of multipotent mesenchymal cells into adipocyte and osteoblast. The polypeptide is Zinc finger protein GLIS1 (Mus musculus (Mouse)).